The chain runs to 123 residues: Small ribosomal subunit protein uS12cz/uS12cy (123 aa).

It belongs to the universal ribosomal protein uS12 family. Part of the 30S ribosomal subunit.

Its subcellular location is the plastid. The protein resides in the chloroplast. With S4 and S5 plays an important role in translational accuracy. Located at the interface of the 30S and 50S subunits. This chain is Small ribosomal subunit protein uS12cz/uS12cy (rps12-A), found in Drimys granadensis.